Consider the following 314-residue polypeptide: Glycerol-3-phosphate dehydrogenase [NAD(P)+] (314 aa).

NADPH-binding residues include serine 14, phenylalanine 15, arginine 35, and lysine 108. Sn-glycerol 3-phosphate-binding residues include lysine 108 and glycine 136. Alanine 140 provides a ligand contact to NADPH. Lysine 191, aspartate 247, serine 257, arginine 258, and asparagine 259 together coordinate sn-glycerol 3-phosphate. The Proton acceptor role is filled by lysine 191. Arginine 258 provides a ligand contact to NADPH. Residues leucine 282 and glutamate 284 each coordinate NADPH.

This sequence belongs to the NAD-dependent glycerol-3-phosphate dehydrogenase family.

The protein localises to the cytoplasm. The catalysed reaction is sn-glycerol 3-phosphate + NAD(+) = dihydroxyacetone phosphate + NADH + H(+). It carries out the reaction sn-glycerol 3-phosphate + NADP(+) = dihydroxyacetone phosphate + NADPH + H(+). It participates in membrane lipid metabolism; glycerophospholipid metabolism. Its function is as follows. Catalyzes the reduction of the glycolytic intermediate dihydroxyacetone phosphate (DHAP) to sn-glycerol 3-phosphate (G3P), the key precursor for phospholipid synthesis. This is Glycerol-3-phosphate dehydrogenase [NAD(P)+] from Rickettsia bellii (strain OSU 85-389).